Reading from the N-terminus, the 203-residue chain is Tic20 family protein Ycf60 (203 aa).

A run of 5 helical transmembrane segments spans residues 2–22 (IRLF…RLAL), 51–71 (TVPY…YVLP), 84–104 (IILP…VTFF), 131–151 (ILLF…PIEF), and 153–173 (ISFL…STIT).

Belongs to the Tic20 family.

It localises to the plastid. The protein localises to the chloroplast membrane. This chain is Tic20 family protein Ycf60 (ycf60), found in Pyropia yezoensis (Susabi-nori).